We begin with the raw amino-acid sequence, 237 residues long: Ribonuclease PH (237 aa).

Phosphate is bound by residues Arg86 and 124-126 (GTR).

It belongs to the RNase PH family. Homohexameric ring arranged as a trimer of dimers.

The catalysed reaction is tRNA(n+1) + phosphate = tRNA(n) + a ribonucleoside 5'-diphosphate. Functionally, phosphorolytic 3'-5' exoribonuclease that plays an important role in tRNA 3'-end maturation. Removes nucleotide residues following the 3'-CCA terminus of tRNAs; can also add nucleotides to the ends of RNA molecules by using nucleoside diphosphates as substrates, but this may not be physiologically important. Probably plays a role in initiation of 16S rRNA degradation (leading to ribosome degradation) during starvation. The polypeptide is Ribonuclease PH (Cereibacter sphaeroides (strain KD131 / KCTC 12085) (Rhodobacter sphaeroides)).